The sequence spans 80 residues: Small ribosomal subunit protein bS18 (80 aa).

It belongs to the bacterial ribosomal protein bS18 family. Part of the 30S ribosomal subunit. Forms a tight heterodimer with protein bS6.

Binds as a heterodimer with protein bS6 to the central domain of the 16S rRNA, where it helps stabilize the platform of the 30S subunit. This chain is Small ribosomal subunit protein bS18, found in Staphylococcus aureus (strain Mu3 / ATCC 700698).